The following is a 299-amino-acid chain: Virginiamycin B lyase (299 aa).

His-229 lines the substrate pocket. Glu-269 serves as a coordination point for Mg(2+). The active-site Proton acceptor is His-271. Glu-286 contacts Mg(2+).

Belongs to the Vgb family. Monomer. Mg(2+) serves as cofactor.

Functionally, inactivates the type B streptogramin antibiotics by linearizing the lactone ring at the ester linkage, generating a free phenylglycine carboxylate and converting the threonyl moiety into 2-amino-butenoic acid. This Bordetella bronchiseptica (strain ATCC BAA-588 / NCTC 13252 / RB50) (Alcaligenes bronchisepticus) protein is Virginiamycin B lyase.